A 349-amino-acid chain; its full sequence is MDLRLYTIFVGFFSVVYAQRTPTISYISQEQIKDIGGTVELECSVQYAQDYPVLWMKVDRNRQVDPLPISTGSSLIIRDSRFALRYDTASSTYTLQIKDIQETDAGFYQCQVIIGLNNKITAEVDLQVRRPPVISDNSTRSLVVSEGQAVRLECYAGGYPAPRVSWRRENNAILPTGGSIYRGNVLKISRIGKEDRGTYYCVAENGVGKGARRNIAVEVEFPPVITVPRPRLGQALQYDMDLECHVEAYPPPAITWLKDETVLSNNQHYSISHFATADEFTDTTRVITIEKRQYGKYQCKAANKLGEAREEVELFETIIPVCPPACGQAYGGDAAEISTSMALILISTI.

An N-terminal signal peptide occupies residues 1-18; it reads MDLRLYTIFVGFFSVVYA. Residues 22-127 enclose the Ig-like V-type domain; it reads PTISYISQEQ…NKITAEVDLQ (106 aa). A disulfide bond links cysteine 43 and cysteine 110. 2 consecutive Ig-like C2-type domains span residues 132–218 and 222–315; these read PVIS…IAVE and PPVI…VELF. An N-linked (GlcNAc...) asparagine glycan is attached at asparagine 137. Cystine bridges form between cysteine 154–cysteine 201 and cysteine 244–cysteine 299. Residue glycine 332 is the site of GPI-anchor amidated glycine attachment. A propeptide spans 333-349 (removed in mature form); it reads DAAEISTSMALILISTI.

In terms of processing, the N-terminus is blocked. As to expression, expressed by all neurogenic cells early, but only those cells that become neuroblasts continue to express it. Expressed by neuroblasts, ganglion mother cells and neurons early in their lives, but expression becomes restricted to a subset of neurons as development progresses. Expressed by sensory neurons as they delaminate from the body wall ectoderm. It is also present on growing axons of the CNS and PNS and becomes restricted to a subset of axons later in development.

Its subcellular location is the cell membrane. Its function is as follows. May play a role in early neuronal differentiation and axon outgrowth. In Schistocerca americana (American grasshopper), this protein is Lachesin (LAC).